The primary structure comprises 617 residues: MLHVRGLGLPGCLALAALASLVHSQHVFLAPQQALSLLQRVRRANSGFLEELRKGNLERECVEEQCSYEEAFEALESPQDTDVFWAKYTVCDSVRKPRETFMDCLEGRCAMDLGLNYHGNVSVTHTGIECQLWRSRYPHRPDINSTTHPGADLKENFCRNPDSSTSGPWCYTTDPTVRREECSIPVCGQEGRTTVKMTPRSRGSKENLSPPLGECLLERGRLYQGNLAVTTLGSPCLAWDSLPTKTLSKYQNFDPEVKLVQNFCRNPDRDEEGAWCFVAQQPGFEYCSLNYCDEAVGEENHDGDESIAGRTTDAEFHTFFDERTFGLGEADCGLRPLFEKKSLTDKTEKELLDSYIDGRIVEGWDAEKGIAPWQVMLFRKSPQELLCGASLISDRWVLTAAHCILYPPWDKNFTENDLLVRIGKHSRTRYERNVEKISMLEKIYIHPRYNWRENLDRDIALLKLKKPVPFSDYIHPVCLPDKQTVTSLLQAGYKGRVTGWGNLRETWTTNINEIQPSVLQVVNLPIVERPVCKASTRIRITDNMFCAGFKVNDTKRGDACEGDSGGPFVMKSPYNHRWYQMGIVSWGEGCDRNGKYGFYTHVFRLKRWMQKVIDQHR.

The signal sequence occupies residues 1–24; that stretch reads MLHVRGLGLPGCLALAALASLVHS. Residues 25-43 constitute a propeptide that is removed on maturation; sequence QHVFLAPQQALSLLQRVRR. Residues 44–90 enclose the Gla domain; the sequence is ANSGFLEELRKGNLERECVEEQCSYEEAFEALESPQDTDVFWAKYTV. 4-carboxyglutamate occurs at positions 50, 51, 58, 60, 63, 64, 69, 70, 73, and 76. A disulfide bridge links Cys61 with Cys66. 10 disulfide bridges follow: Cys91–Cys104, Cys109–Cys187, Cys130–Cys170, Cys158–Cys182, Cys215–Cys292, Cys236–Cys276, Cys264–Cys287, Cys332–Cys478, Cys387–Cys403, and Cys532–Cys546. Kringle domains lie at 109–187 and 215–292; these read CAMD…IPVC and CLLE…LNYC. N-linked (GlcNAc...) asparagine glycosylation is found at Asn120 and Asn144. Residues 360-614 enclose the Peptidase S1 domain; sequence IVEGWDAEKG…LKRWMQKVID (255 aa). The active-site Charge relay system is the His402. An N-linked (GlcNAc...) asparagine glycan is attached at Asn412. Asp458 (charge relay system) is an active-site residue. The interval 547–569 is high affinity receptor-binding region which is also known as the TP508 peptide; it reads AGFKVNDTKRGDACEGDSGGPFV. The N-linked (GlcNAc...) asparagine glycan is linked to Asn552. A disulfide bridge connects residues Cys560 and Cys590. Residue Ser564 is the Charge relay system of the active site.

It belongs to the peptidase S1 family. In terms of assembly, heterodimer (named alpha-thrombin) of a light and a heavy chain; disulfide-linked. Forms a heterodimer with SERPINA5. In plasma, interacts (via N-terminus) with alpha-1-microglobulin; this interaction does not prevent the activation of prothrombin to thrombin. In terms of processing, the gamma-carboxyglutamyl residues, which bind calcium ions, result from the carboxylation of glutamyl residues by a microsomal enzyme, the vitamin K-dependent carboxylase. The modified residues are necessary for the calcium-dependent interaction with a negatively charged phospholipid surface, which is essential for the conversion of prothrombin to thrombin. In the penultimate step of the coagulation cascade, prothrombin is converted to thrombin by the prothrombinase complex composed of factor Xa (F10), cofactor Va (F5), and phospholipids. This activation requires factor Xa-catalyzed sequential cleavage at 2 sites, Arg-310 and Arg-359, along 2 possible pathways. In the first pathway, the first cleavage occurs at Arg-310, leading to the formation of the inactive intermediate prethrombin-2. This pathway preferentially occurs on platelets and in the absence of cofactor Va. In the second pathway, the first cleavage occurs at Arg-359, which separates protease domain into 2 chains that remain connected through a disulfide bond and generates the active intermediate meizothrombin. The presence of cofactor Va directs activation along the meizothrombin pathway and greatly accelerates the rate of cleavage at Arg-359, but has a smaller effect on the cleavage of meizothrombin at Arg-310. Meizothrombin accumulates as an intermediate when prothrombinase is assembled on the membrane of red blood cells.

It carries out the reaction Selective cleavage of Arg-|-Gly bonds in fibrinogen to form fibrin and release fibrinopeptides A and B.. With respect to regulation, activity is promoted in the presence of negatively charged surfaces, such as polyphosphate and dextran sulfate. Inhibited by SERPINA5. Thrombin, which cleaves bonds after Arg and Lys, converts fibrinogen to fibrin and activates factors V, VII, VIII, XIII, and, in complex with thrombomodulin, protein C. Functions in blood homeostasis, inflammation and wound healing. Activates coagulation factor XI (F11); activation is promoted by the contact with negatively charged surfaces. Triggers the production of pro-inflammatory cytokines, such as MCP-1/CCL2 and IL8/CXCL8, in endothelial cells. The sequence is that of Prothrombin (F2) from Rattus norvegicus (Rat).